A 199-amino-acid chain; its full sequence is MSKQNKKDWKKFKDEHKEEHKVENEILEEEIDEKSQHQEPALGHPSYTALEEQLTLAEQKAHENWEKSVRALAELDNVRRRMEREVANAHKYGVEKLISALLPVVDSLEQALQLADKNSDPSMHEGLELTMKLFLDALQKFDVEQIDPLGQTFDPQQHEAMSMQPAPGAPPNSVITVFQKGYKLSDRVIRPARVIVSTK.

The span at 1–24 shows a compositional bias: basic and acidic residues; the sequence is MSKQNKKDWKKFKDEHKEEHKVEN. The interval 1–47 is disordered; that stretch reads MSKQNKKDWKKFKDEHKEEHKVENEILEEEIDEKSQHQEPALGHPSY.

The protein belongs to the GrpE family. Homodimer.

The protein localises to the cytoplasm. Functionally, participates actively in the response to hyperosmotic and heat shock by preventing the aggregation of stress-denatured proteins, in association with DnaK and GrpE. It is the nucleotide exchange factor for DnaK and may function as a thermosensor. Unfolded proteins bind initially to DnaJ; upon interaction with the DnaJ-bound protein, DnaK hydrolyzes its bound ATP, resulting in the formation of a stable complex. GrpE releases ADP from DnaK; ATP binding to DnaK triggers the release of the substrate protein, thus completing the reaction cycle. Several rounds of ATP-dependent interactions between DnaJ, DnaK and GrpE are required for fully efficient folding. The chain is Protein GrpE from Legionella pneumophila (strain Paris).